Here is a 547-residue protein sequence, read N- to C-terminus: Undecaprenyl phosphate-alpha-4-amino-4-deoxy-L-arabinose arabinosyl transferase (547 aa).

The next 11 membrane-spanning stretches (helical) occupy residues 1 to 21, 83 to 103, 111 to 131, 174 to 194, 205 to 225, 253 to 273, 286 to 306, 311 to 331, 346 to 366, 378 to 398, and 408 to 428; these read MKLT…LPLD, FASA…ALQL, FLAG…TYSV, FLTK…PYVI, FGPL…IAVH, APFW…LGLL, ISPE…FFSV, LLTY…ASAV, AWLN…LALS, GALA…FIQL, and SALC…QSLI.

This sequence belongs to the glycosyltransferase 83 family.

Its subcellular location is the cell inner membrane. The enzyme catalyses 4-amino-4-deoxy-alpha-L-arabinopyranosyl di-trans,octa-cis-undecaprenyl phosphate + lipid IVA = lipid IIA + di-trans,octa-cis-undecaprenyl phosphate.. The protein operates within lipopolysaccharide metabolism; 4-amino-4-deoxy-beta-L-arabinose-lipid A biosynthesis. In terms of biological role, catalyzes the transfer of the L-Ara4N moiety of the glycolipid undecaprenyl phosphate-alpha-L-Ara4N to lipid A. The modified arabinose is attached to lipid A and is required for resistance to polymyxin and cationic antimicrobial peptides. This is Undecaprenyl phosphate-alpha-4-amino-4-deoxy-L-arabinose arabinosyl transferase from Aeromonas salmonicida (strain A449).